The following is a 374-amino-acid chain: 3-dehydroquinate synthase (374 aa).

This sequence belongs to the archaeal-type DHQ synthase family.

It carries out the reaction 2-amino-2,3,7-trideoxy-D-lyxo-hept-6-ulosonate + NAD(+) + H2O = 3-dehydroquinate + NH4(+) + NADH + H(+). Catalyzes the oxidative deamination and cyclization of 2-amino-3,7-dideoxy-D-threo-hept-6-ulosonic acid (ADH) to yield 3-dehydroquinate (DHQ), which is fed into the canonical shikimic pathway of aromatic amino acid biosynthesis. The protein is 3-dehydroquinate synthase of Methanothermobacter thermautotrophicus (strain ATCC 29096 / DSM 1053 / JCM 10044 / NBRC 100330 / Delta H) (Methanobacterium thermoautotrophicum).